We begin with the raw amino-acid sequence, 474 residues long: Glutamate--tRNA ligase 2 (474 aa).

The 'HIGH' region motif lies at 16 to 26 (PSPTGFLHIGG). The short motif at 245–249 (KLSKR) is the 'KMSKS' region element. K248 contacts ATP.

This sequence belongs to the class-I aminoacyl-tRNA synthetase family. Glutamate--tRNA ligase type 1 subfamily. Monomer.

The protein localises to the cytoplasm. The catalysed reaction is tRNA(Glu) + L-glutamate + ATP = L-glutamyl-tRNA(Glu) + AMP + diphosphate. In terms of biological role, catalyzes the attachment of glutamate to tRNA(Glu) in a two-step reaction: glutamate is first activated by ATP to form Glu-AMP and then transferred to the acceptor end of tRNA(Glu). This is Glutamate--tRNA ligase 2 from Rhizorhabdus wittichii (strain DSM 6014 / CCUG 31198 / JCM 15750 / NBRC 105917 / EY 4224 / RW1) (Sphingomonas wittichii).